A 90-amino-acid chain; its full sequence is Cyclin-dependent kinases regulatory subunit 1 (90 aa).

It belongs to the CKS family.

Binds to the catalytic subunit of the cyclin dependent kinases and is essential for their biological function. This chain is Cyclin-dependent kinases regulatory subunit 1 (CKS1), found in Oryza sativa subsp. indica (Rice).